The following is a 606-amino-acid chain: Thrombospondin-related anonymous protein (606 aa).

The N-terminal stretch at 1 to 24 is a signal peptide; it reads MKLLGNSKYFFVVLLLCISVFLNG. One can recognise a VWFA domain in the interval 43-228; it reads DLHILLDGSG…TMIKPFLSKV (186 aa). The 47-residue stretch at 235–281 folds into the TSP type-1 domain; sequence VALCGKWEEWSECSTTCDNGTKIRKRKVLHPNCAGEMTAPCKVRDCP. Residues 301-541 are disordered; that stretch reads PVEPIEPAEP…SKKQSKSNNG (241 aa). Low complexity-rich tracts occupy residues 409–425, 440–450, and 459–479; these read ENPF…IIAP, ELPNNLPESPS, and PNDN…IPNK. Composition is skewed to basic and acidic residues over residues 487-504 and 516-532; these read NPYK…RSND and DKLE…ENKS. The chain crosses the membrane as a helical span at residues 544–564; it reads IAGGIIGGLAIIGCIGVGYNF.

In terms of assembly, interacts (via integrin-like A-domain) with Anopheles gambiae saglin/SG1F; the interaction probably promotes sporozoite invasion of salivary gland. Interacts (via integrin-like A-domain) with human AHSG; the interaction promotes sporozoite invasion of hepatocytes and formation of exoerythrocytic forms of parasites in human hepatoma HepG2 cells.

The protein localises to the cell membrane. It localises to the cytoplasm. Promotes parasite ability to invade host hepatocytes. Promotes parasite ability to invade mosquito salivary glands. Required for sporozoite gliding motility. This Plasmodium berghei (strain Anka) protein is Thrombospondin-related anonymous protein.